We begin with the raw amino-acid sequence, 100 residues long: Urease subunit gamma (100 aa).

It belongs to the urease gamma subunit family. In terms of assembly, heterotrimer of UreA (gamma), UreB (beta) and UreC (alpha) subunits. Three heterotrimers associate to form the active enzyme. Post-translationally, although not discussed in the published references, Met-1 is represented in the submitted PDB entries as being modified by either a formyl, a carboxyl, or an acetyl group. The N-terminal is probably N-(dihydroxymethyl)methionine, the hydrated form of N-formylmethionine.

The protein localises to the cytoplasm. The enzyme catalyses urea + 2 H2O + H(+) = hydrogencarbonate + 2 NH4(+). Its pathway is nitrogen metabolism; urea degradation; CO(2) and NH(3) from urea (urease route): step 1/1. The polypeptide is Urease subunit gamma (Sporosarcina pasteurii (Bacillus pasteurii)).